We begin with the raw amino-acid sequence, 92 residues long: Subtilisin inhibitor 1 (92 aa).

A compositionally biased stretch (polar residues) spans 1–12 (QEQGTNPSQEQN). Residues 1–31 (QEQGTNPSQEQNVPLPRNYKQALETNTPTKT) are disordered.

The protein belongs to the protease inhibitor I13 (potato type I serine protease inhibitor) family.

Inhibitor of subtilisin. The protein is Subtilisin inhibitor 1 of Phaseolus angularis (Azuki bean).